We begin with the raw amino-acid sequence, 344 residues long: L-rhamnose-proton symporter (344 aa).

Helical transmembrane passes span 4–24 (AITMGIFWHLIGAASAACFYA), 38–58 (WSVGGIVSWLILPWTISALLL), 68–88 (FNLSTLLPVFLFGAMWGIGNI), 101–121 (MGIGIAIGITLIVGTLMTPII), 137–157 (TLLGVFVALIGVGIVTRAGQL), 175–195 (LLLAVMCGIFSAGMSFAMNAA), 214–234 (LPSYVVIMGGGALVNLGFCFI), 259–279 (ILLSALGGLMWYLQFFFYAWG), 290–310 (MSWMLHMSFYVLCGGLVGLVL), and 321–341 (VAVLSLGCVVIIIAANIVGLG).

The protein belongs to the L-rhamnose transporter (TC 2.A.7.6) family.

The protein resides in the cell inner membrane. The catalysed reaction is L-rhamnopyranose(in) + H(+)(in) = L-rhamnopyranose(out) + H(+)(out). Functionally, uptake of L-rhamnose across the cytoplasmic membrane with the concomitant transport of protons into the cell (symport system). The chain is L-rhamnose-proton symporter from Salmonella agona (strain SL483).